Reading from the N-terminus, the 630-residue chain is ATP-dependent zinc metalloprotease FtsH (630 aa).

Residues 1–7 lie on the Cytoplasmic side of the membrane; it reads MNNFMKN. Residues 8 to 28 traverse the membrane as a helical segment; it reads IGFYLVLIALSILVAQFFVDT. Over 29–111 the chain is Periplasmic; the sequence is DVNTIVDTDV…KTEPEPTAPW (83 aa). The chain crosses the membrane as a helical span at residues 112 to 132; the sequence is WTGMLAYILPIILLIGAWFFI. The Cytoplasmic portion of the chain corresponds to 133–630; that stretch reads MQRMQGGGSQ…ENREHENNDK (498 aa). ATP is bound at residue 203-210; it reads GPPGTGKT. Position 425 (His-425) interacts with Zn(2+). Residue Glu-426 is part of the active site. Residues His-429 and Asp-501 each coordinate Zn(2+). The interval 601 to 630 is disordered; the sequence is KLIKGEPLDDDSIDNSTDENENREHENNDK. Residues 608 to 619 show a composition bias toward acidic residues; that stretch reads LDDDSIDNSTDE. Residues 620 to 630 are compositionally biased toward basic and acidic residues; sequence NENREHENNDK.

The protein in the central section; belongs to the AAA ATPase family. This sequence in the C-terminal section; belongs to the peptidase M41 family. Homohexamer. Zn(2+) serves as cofactor.

The protein localises to the cell inner membrane. Acts as a processive, ATP-dependent zinc metallopeptidase for both cytoplasmic and membrane proteins. Plays a role in the quality control of integral membrane proteins. This chain is ATP-dependent zinc metalloprotease FtsH, found in Halothermothrix orenii (strain H 168 / OCM 544 / DSM 9562).